Here is an 842-residue protein sequence, read N- to C-terminus: Translation initiation factor IF-2 (842 aa).

The segment at 121-144 is disordered; that stretch reads TESTSVEKSESDDVTLEEESSKKV. Positions 340 to 510 constitute a tr-type G domain; it reads PRAPVVTVMG…LLMAELLELK (171 aa). Positions 349 to 356 are G1; it reads GHVDHGKT. GTP is bound at residue 349 to 356; it reads GHVDHGKT. A G2 region spans residues 374 to 378; that stretch reads GITQH. A G3 region spans residues 396–399; that stretch reads DTPG. GTP-binding positions include 396 to 400 and 450 to 453; these read DTPGH and NKID. The G4 stretch occupies residues 450–453; that stretch reads NKID. The tract at residues 486–488 is G5; that stretch reads SAK.

This sequence belongs to the TRAFAC class translation factor GTPase superfamily. Classic translation factor GTPase family. IF-2 subfamily.

It is found in the cytoplasm. Functionally, one of the essential components for the initiation of protein synthesis. Protects formylmethionyl-tRNA from spontaneous hydrolysis and promotes its binding to the 30S ribosomal subunits. Also involved in the hydrolysis of GTP during the formation of the 70S ribosomal complex. The polypeptide is Translation initiation factor IF-2 (Ehrlichia chaffeensis (strain ATCC CRL-10679 / Arkansas)).